Here is a 259-residue protein sequence, read N- to C-terminus: UPF0246 protein PSPTO_1244 (259 aa).

The protein belongs to the UPF0246 family.

This Pseudomonas syringae pv. tomato (strain ATCC BAA-871 / DC3000) protein is UPF0246 protein PSPTO_1244.